The primary structure comprises 273 residues: DnaJ homolog subfamily C member 27 (273 aa).

Residues 23 to 30 (GNAEVGKS), 71 to 75 (DMAGH), and 134 to 137 (NKVD) each bind GTP. Residues 217-273 (DSWDMLGVKPGATREEVNKAYRKLAVLLHPDKCVAPGSEDAFKAVVNARTSLLKNIK) form the J domain.

It belongs to the small GTPase superfamily. Rab family.

Its subcellular location is the nucleus. Its function is as follows. GTPase possibly involved in regulation of the MEK/ERK pathway. This chain is DnaJ homolog subfamily C member 27 (dnajc27), found in Danio rerio (Zebrafish).